The sequence spans 396 residues: Metacaspase-1 (396 aa).

The segment covering 1–20 has biased composition (gly residues); the sequence is MSGYPGQGYQGQGYGQGYGQ. The tract at residues 1–86 is disordered; it reads MSGYPGQGYQ…PQGMQQFGHG (86 aa). Low complexity predominate over residues 47 to 62; it reads HYQYGPPQGGYQYPPQ. Residues 72–81 show a composition bias toward polar residues; it reads QAHQPPQGMQ. Residues H186 and C242 contribute to the active site.

Belongs to the peptidase C14B family.

Functionally, involved in cell death (apoptosis). The protein is Metacaspase-1 (MCA1) of Pyricularia oryzae (strain 70-15 / ATCC MYA-4617 / FGSC 8958) (Rice blast fungus).